We begin with the raw amino-acid sequence, 250 residues long: uncharacterized protein (250 aa).

The next 7 helical transmembrane spans lie at 36 to 56 (VALG…VPAV), 73 to 93 (PLYM…GFAM), 101 to 121 (AGAL…SVML), 128 to 148 (VAAT…FGYT), 156 to 176 (FGSF…VSIF), 180 to 200 (PALL…LIAY), and 225 to 245 (FGAL…LSFF).

The protein belongs to the BI1 family.

The protein localises to the cell membrane. This is an uncharacterized protein from Caulobacter vibrioides (strain ATCC 19089 / CIP 103742 / CB 15) (Caulobacter crescentus).